The sequence spans 280 residues: Large ribosomal subunit protein uL2 (280 aa).

Disordered regions lie at residues 27–59 (STPE…GGHK) and 225–280 (VMNP…KHSR). Basic residues-rich tracts occupy residues 37–59 (LHGR…GGHK) and 268–280 (IVRR…KHSR).

The protein belongs to the universal ribosomal protein uL2 family. Part of the 50S ribosomal subunit. Forms a bridge to the 30S subunit in the 70S ribosome.

Functionally, one of the primary rRNA binding proteins. Required for association of the 30S and 50S subunits to form the 70S ribosome, for tRNA binding and peptide bond formation. It has been suggested to have peptidyltransferase activity; this is somewhat controversial. Makes several contacts with the 16S rRNA in the 70S ribosome. This chain is Large ribosomal subunit protein uL2, found in Mycobacterium bovis (strain ATCC BAA-935 / AF2122/97).